Reading from the N-terminus, the 458-residue chain is MGKEKTHVNVVVIGHVDSGKSTTTGHLIYKCGGIDKRTIEKFEKEAAELGKGSFKYAWVLDKLKAERERGITIDIALWKFETPKYHVTVIDAPGHRDFIKNMITGTSQADCAILIIAGGVGEFEAGISKDGQTREHALLAYTLGVKQLIVAINKMDSVKWDESRYQEIVKETSNFIKKVGYNPKTVPFVPISGWNGDNMIEATTNAPWYKGWEKETKAGAVKGKTLLEAIDAIEPPVRPTDKALRLPLQDVYKIGGIGTVPVGRVETGVIKPGMVVTFAPSGVTTEVKSVEMHHEQLEEGVPGDNVGFNVKNVSVKEIRRGNVCGDSKNDPPKAAESFNATVIVLNHPGQISAGYSPVLDCHTAHIACKFDELLEKNDRRTGKKLEDSPKFLKAGDAAMVKFVPSKPMCVEAFTDYPPLGRFAVRDMRQTVAVGVIKSVVKSDKAGKVTKAAQKAGKK.

Position 2 is a n,N,N-trimethylglycine (glycine 2). Residue lysine 3 is modified to N6,N6-dimethyllysine; alternate. Lysine 3 is subject to N6-methyllysine; alternate. One can recognise a tr-type G domain in the interval 5-240 (KTHVNVVVIG…DAIEPPVRPT (236 aa)). The G1 stretch occupies residues 14 to 21 (GHVDSGKS). A GTP-binding site is contributed by 14 to 21 (GHVDSGKS). Lysine 30 is modified (N6-methyllysine). The segment at 70–74 (GITID) is G2. The residue at position 79 (lysine 79) is an N6,N6,N6-trimethyllysine. The interval 91–94 (DAPG) is G3. Residues 91–95 (DAPGH) and 153–156 (NKMD) contribute to the GTP site. A G4 region spans residues 153-156 (NKMD). The segment at 192–194 (SGW) is G5. Residue lysine 316 is modified to N6,N6-dimethyllysine; alternate. The residue at position 316 (lysine 316) is an N6-methyllysine; alternate. Residue lysine 390 is modified to N6-methyllysine.

It belongs to the TRAFAC class translation factor GTPase superfamily. Classic translation factor GTPase family. EF-Tu/EF-1A subfamily.

It localises to the cytoplasm. Its function is as follows. This protein promotes the GTP-dependent binding of aminoacyl-tRNA to the A-site of ribosomes during protein biosynthesis. This is Elongation factor 1-alpha (TEF) from Eremothecium gossypii (strain ATCC 10895 / CBS 109.51 / FGSC 9923 / NRRL Y-1056) (Yeast).